The sequence spans 210 residues: Pyridoxine/pyridoxamine 5'-phosphate oxidase (210 aa).

Substrate is bound by residues 7–10 (RQSY) and lysine 65. Residues 60–65 (RIVLIK), 75–76 (FT), arginine 81, lysine 82, and glutamine 104 contribute to the FMN site. Substrate is bound by residues tyrosine 122, arginine 126, and serine 130. FMN-binding positions include 139 to 140 (QS) and tryptophan 182. A substrate-binding site is contributed by 188 to 190 (RLH). FMN is bound at residue arginine 192.

This sequence belongs to the pyridoxamine 5'-phosphate oxidase family. Homodimer. FMN serves as cofactor.

The enzyme catalyses pyridoxamine 5'-phosphate + O2 + H2O = pyridoxal 5'-phosphate + H2O2 + NH4(+). The catalysed reaction is pyridoxine 5'-phosphate + O2 = pyridoxal 5'-phosphate + H2O2. Its pathway is cofactor metabolism; pyridoxal 5'-phosphate salvage; pyridoxal 5'-phosphate from pyridoxamine 5'-phosphate: step 1/1. It functions in the pathway cofactor metabolism; pyridoxal 5'-phosphate salvage; pyridoxal 5'-phosphate from pyridoxine 5'-phosphate: step 1/1. In terms of biological role, catalyzes the oxidation of either pyridoxine 5'-phosphate (PNP) or pyridoxamine 5'-phosphate (PMP) into pyridoxal 5'-phosphate (PLP). The polypeptide is Pyridoxine/pyridoxamine 5'-phosphate oxidase (Bordetella avium (strain 197N)).